The chain runs to 65 residues: Large ribosomal subunit protein bL35 (65 aa).

Residues 1-26 (MPKIKTLRGAAKRFKKTASGGFKRKQ) are disordered. Over residues 10 to 26 (AAKRFKKTASGGFKRKQ) the composition is skewed to basic residues.

It belongs to the bacterial ribosomal protein bL35 family.

The polypeptide is Large ribosomal subunit protein bL35 (Histophilus somni (strain 2336) (Haemophilus somnus)).